The primary structure comprises 37 residues: Large ribosomal subunit protein bL36c (37 aa).

Belongs to the bacterial ribosomal protein bL36 family.

It localises to the plastid. The protein is Large ribosomal subunit protein bL36c (rpl36) of Euglena longa (Euglenophycean alga).